The chain runs to 96 residues: Protein transport protein Sec61 subunit beta (96 aa).

Over residues 1–17 (MPGPTPSGTNVGSSGRS) the composition is skewed to polar residues. The segment at 1 to 54 (MPGPTPSGTNVGSSGRSPSKAVAARAAGSTVRQRKNASCGTRSAGRTTSAGTGG) is disordered. Pro2 bears the N-acetylproline mark. The Cytoplasmic portion of the chain corresponds to 2–71 (PGPTPSGTNV…DSPGLKVGPV (70 aa)). Residue Ser7 is modified to Phosphoserine. At Thr9 the chain carries Phosphothreonine. Residues Ser13, Ser14, and Ser17 each carry the phosphoserine modification. Cys39 carries the S-palmitoyl cysteine lipid modification. A compositionally biased stretch (low complexity) spans 40–50 (GTRSAGRTTSA). The chain crosses the membrane as a helical span at residues 72–91 (PVLVMSLLFIASVFMLHIWG). At 92–96 (KYTRS) the chain is on the lumenal side.

Belongs to the SEC61-beta family. The SEC61 channel-forming translocon complex consists of channel-forming core components SEC61A1, SEC61B and SEC61G and different auxiliary components such as SEC62 and SEC63. The SEC61 channel associates with the multi-pass translocon (MPT) complex. Interacts with TRAM1.

Its subcellular location is the endoplasmic reticulum membrane. Component of SEC61 channel-forming translocon complex that mediates transport of signal peptide-containing precursor polypeptides across the endoplasmic reticulum (ER). Forms a ribosome receptor and a gated pore in the ER membrane, both functions required for cotranslational translocation of nascent polypeptides. The SEC61 channel is also involved in ER membrane insertion of transmembrane proteins: it mediates membrane insertion of the first few transmembrane segments of proteins, while insertion of subsequent transmembrane regions of multi-pass membrane proteins is mediated by the multi-pass translocon (MPT) complex. The SEC61 channel cooperates with the translocating protein TRAM1 to import nascent proteins into the ER. The protein is Protein transport protein Sec61 subunit beta (SEC61B) of Canis lupus familiaris (Dog).